An 82-amino-acid polypeptide reads, in one-letter code: Small ribosomal subunit protein eS27 (82 aa).

A C4-type zinc finger spans residues 37-59; the sequence is CPGCFTITTVFSHAQTVVICQGC.

It belongs to the eukaryotic ribosomal protein eS27 family. As to quaternary structure, component of the small ribosomal subunit (SSU). Mature N.crassa ribosomes consist of a small (40S) and a large (60S) subunit. The 40S small subunit contains 1 molecule of ribosomal RNA (18S rRNA) and at least 32 different proteins. The large 60S subunit contains 3 rRNA molecules (26S, 5.8S and 5S rRNA) and at least 42 different proteins. Zn(2+) is required as a cofactor.

It localises to the cytoplasm. Functionally, component of the ribosome, a large ribonucleoprotein complex responsible for the synthesis of proteins in the cell. The small ribosomal subunit (SSU) binds messenger RNAs (mRNAs) and translates the encoded message by selecting cognate aminoacyl-transfer RNA (tRNA) molecules. The large subunit (LSU) contains the ribosomal catalytic site termed the peptidyl transferase center (PTC), which catalyzes the formation of peptide bonds, thereby polymerizing the amino acids delivered by tRNAs into a polypeptide chain. The nascent polypeptides leave the ribosome through a tunnel in the LSU and interact with protein factors that function in enzymatic processing, targeting, and the membrane insertion of nascent chains at the exit of the ribosomal tunnel. The polypeptide is Small ribosomal subunit protein eS27 (crp-6) (Neurospora crassa (strain ATCC 24698 / 74-OR23-1A / CBS 708.71 / DSM 1257 / FGSC 987)).